The sequence spans 467 residues: Neuromedin-K receptor (467 aa).

Topologically, residues 1–86 (MDSFAAAETW…TNQFVQPSWR (86 aa)) are extracellular. N-linked (GlcNAc...) asparagine glycans are attached at residues N23, N50, and N75. The chain crosses the membrane as a helical span at residues 87 to 109 (IALWSLAYGVVVAVAVFGNLIVI). The Cytoplasmic segment spans residues 110 to 119 (WIILAHKRMR). Residues 120-141 (TVTNYFLVNLAFSDASMAAFNT) traverse the membrane as a helical segment. Residues 142–161 (LVNFIYALHSEWYFGANYCR) lie on the Extracellular side of the membrane. An intrachain disulfide couples C160 to C235. Residues 162-183 (FQNFFPITAVFASIYSMTAIAV) traverse the membrane as a helical segment. Over 184–203 (DRYMAIIDPLKPRLSATATK) the chain is Cytoplasmic. A helical membrane pass occupies residues 204–224 (IVIGSIWILAFLLALPQCLYS). Residues 225-247 (KTKVMPGRTLCYVQWPEGPKQHF) are Extracellular-facing. Residues 248 to 272 (IYHIIVIILVYCFPLLIMGITYTIV) traverse the membrane as a helical segment. Over 273–301 (GITLWGGEIPGDTCDKYHEQLKAKRKVVK) the chain is Cytoplasmic. The helical transmembrane segment at 302-323 (MMIIVVVTFAICWLPYHIYFIL) threads the bilayer. At 324–336 (TAIYQQLNRWKYI) the chain is on the extracellular side. Residues 337–361 (QQVYLASFWLAMSSTMYNPIIYCCL) traverse the membrane as a helical segment. Residues 362–467 (NKRFRAGFKR…SPYTSMEEYS (106 aa)) lie on the Cytoplasmic side of the membrane. C376 carries S-palmitoyl cysteine lipidation. The interval 416-467 (DPSDADNTRSSRKKRATPGDPNFNGCSRRNSKSASTTSSFISSPYTSMEEYS) is disordered. Over residues 447-467 (KSASTTSSFISSPYTSMEEYS) the composition is skewed to low complexity.

This sequence belongs to the G-protein coupled receptor 1 family.

The protein resides in the cell membrane. In terms of biological role, this is a receptor for the tachykinin neuropeptide neuromedin-K (neurokinin B). It is associated with G proteins that activate a phosphatidylinositol-calcium second messenger system. The polypeptide is Neuromedin-K receptor (TACR3) (Oryctolagus cuniculus (Rabbit)).